Here is a 116-residue protein sequence, read N- to C-terminus: Distal membrane-arm assembly complex protein 1 (116 aa).

Positions 1–39 (MGSRLSQPFESYITAPPGTAAAPAKPAPPATPGAPTSPA) are disordered. A compositionally biased stretch (low complexity) spans 14–24 (TAPPGTAAAPA). Helical transmembrane passes span 52–69 (VLSG…YWVA) and 82–104 (WTIT…GIVV).

As to quaternary structure, interacts with incompletely assembled mitochondrial NADH:ubiquinone oxidoreductase complex (complex I).

The protein resides in the mitochondrion inner membrane. Required for the assembly of the mitochondrial NADH:ubiquinone oxidoreductase complex (complex I). Involved in the assembly of the distal region of complex I. The chain is Distal membrane-arm assembly complex protein 1 from Homo sapiens (Human).